A 373-amino-acid chain; its full sequence is 3 beta-hydroxysteroid dehydrogenase/Delta 5--&gt;4-isomerase type 2 (373 aa).

The Proton acceptor role is filled by Tyr155. An NAD(+)-binding site is contributed by Lys159. Residues 288-308 (VALLYWLGFLLELVNFLLRPV) form a helical membrane-spanning segment.

It belongs to the 3-beta-HSD family. In terms of tissue distribution, high levels in adrenal gland, kidney and male liver. Low levels in female liver.

It localises to the endoplasmic reticulum membrane. It is found in the mitochondrion membrane. The catalysed reaction is a 3beta-hydroxy-Delta(5)-steroid + NAD(+) = a 3-oxo-Delta(5)-steroid + NADH + H(+). The enzyme catalyses a 3-oxo-Delta(5)-steroid = a 3-oxo-Delta(4)-steroid. It catalyses the reaction pregnenolone + NAD(+) = pregn-5-ene-3,20-dione + NADH + H(+). It carries out the reaction pregn-5-ene-3,20-dione = progesterone. The catalysed reaction is 3beta-hydroxyandrost-5-en-17-one + NAD(+) = androst-5-ene-3,17-dione + NADH + H(+). The enzyme catalyses androst-5-ene-3,17-dione = androst-4-ene-3,17-dione. The protein operates within lipid metabolism; steroid biosynthesis. Functionally, 3-beta-HSD is a bifunctional enzyme, that catalyzes the oxidative conversion of Delta(5)-ene-3-beta-hydroxy steroid, and the oxidative conversion of ketosteroids. The 3-beta-HSD enzymatic system plays a crucial role in the biosynthesis of all classes of hormonal steroids. This Mesocricetus auratus (Golden hamster) protein is 3 beta-hydroxysteroid dehydrogenase/Delta 5--&gt;4-isomerase type 2 (HSD3B2).